The following is a 116-amino-acid chain: Anti-sigma F factor antagonist (116 aa).

Residues 3–113 enclose the STAS domain; the sequence is LSIELEFKQD…PNEANALQKL (111 aa). Residue S58 is modified to Phosphoserine.

The protein belongs to the anti-sigma-factor antagonist family. Post-translationally, phosphorylated by SpoIIAB on a serine residue.

Its function is as follows. In the phosphorylated form it could act as an anti-anti-sigma factor that counteracts SpoIIAB and thus releases sigma f from inhibition. This is Anti-sigma F factor antagonist (spoIIAA) from Priestia megaterium (Bacillus megaterium).